The sequence spans 133 residues: Small ribosomal subunit protein uS9 (133 aa).

This sequence belongs to the universal ribosomal protein uS9 family.

In Picrophilus torridus (strain ATCC 700027 / DSM 9790 / JCM 10055 / NBRC 100828 / KAW 2/3), this protein is Small ribosomal subunit protein uS9.